The primary structure comprises 517 residues: MDIVGGQNLRQMWDDLAGVYGDKTALIFESCEGIVRQFSYASLNEEINRTANLFYSLGIRKGDRVALHLDNCPEFIFCWFGLAKIGAIMVPINARLLGEESAWILQNSQVSLLVTSAQFYPMYREIRQDNSTPLNHICLIGEQLPADDGVSHFTQRQSRQSTTLCYTPALSTDDTAEILFTSGTTSRPKGVVITHYNLRFAGYYSAWQIALRDDDVYMTVMPAFHIDCQCTAAMPAFSAGSTFVLLEKYSARAFWDQVRKYQATVTECIPMMIRTLMVQPAAPTDRQHHLREVMFYLNLSAQEKDAFTERFGVRLLTSYGMTETIVGIIGDRPGDKRRWPSIGRVGFSYEAEIRDDQNRPLPAGEIGEICIKGIPGKTIFKEYYMQPEATARALEPEGWLHTGDSGYQDEDGYFYFVDRRCNMIKRGGENVSCVELENIISAHPKIQDIVVVGIKDAIRDEAIKAFIVLNEGETLSEAEFFSFCENNMAKFKVPSFMEIRTDLPRNCSGKIIKKNLK.

Belongs to the ATP-dependent AMP-binding enzyme family.

It carries out the reaction 4-(trimethylamino)butanoate + ATP + CoA = 4-(trimethylamino)butanoyl-CoA + AMP + diphosphate. The enzyme catalyses crotonobetaine + ATP + CoA = crotonobetainyl-CoA + AMP + diphosphate. It catalyses the reaction (R)-carnitine + ATP + CoA = (R)-carnitinyl-CoA + AMP + diphosphate. It participates in amine and polyamine metabolism; carnitine metabolism. Catalyzes the transfer of CoA to carnitine, generating the initial carnitinyl-CoA needed for the CaiB reaction cycle. Also has activity toward crotonobetaine and gamma-butyrobetaine. The protein is Crotonobetaine/carnitine--CoA ligase of Salmonella paratyphi B (strain ATCC BAA-1250 / SPB7).